The following is a 377-amino-acid chain: Malate dehydrogenase, cytoplasmic (377 aa).

Positions P2 to V5 match the Pro/N-degron motif. Residue T6 is modified to Phosphothreonine. NAD(+) is bound by residues G20–G26 and D57. Substrate contacts are provided by R106 and R112. NAD(+) is bound by residues N119 and I144 to N146. The substrate site is built by N146 and R185. H215 (proton acceptor) is an active-site residue. Position 266 (M266) interacts with NAD(+).

The protein belongs to the LDH/MDH superfamily. MDH type 1 family. In terms of assembly, homodimer. Targeted for proteasomal degradation when cells are shifted to glucose-containing growth medium.

The protein localises to the cytoplasm. The catalysed reaction is (S)-malate + NAD(+) = oxaloacetate + NADH + H(+). In terms of biological role, the isoenzyme MDH2 may function primarily in the glyoxylate cycle. The protein is Malate dehydrogenase, cytoplasmic (MDH2) of Saccharomyces cerevisiae (strain ATCC 204508 / S288c) (Baker's yeast).